A 366-amino-acid polypeptide reads, in one-letter code: MNTFGRKLRLTTFGESHGNAIGGVIDGFPSGVKIDEKFIQAELDKRKPGGKFATARKENDKVQIFSGIFEGVSIGTPIGFIIFNENQKSKDYENIKNLFRPGHADFGYFKKFVIRDYRGGGRSSARETAVRVAAGAFAQILLNEFDICVQSGIFSIGSINKGGEISNAKNLKMDFDYAQTSEIFSLFKEFENEMKNEILNAKNAHDSVGGNVVTRVKNVPAGLGEVLYDKIDAKIAYALMGINGVKAVEIGAGVKASEMIGSENNDEILPFGKFKTNHSGGILGGITNGDEIIVKSHFKPTPSIFLAQNTIDESGAVKTLSLKGRHDPCIAVRGSVVATAMMRLIVADMMLLNLGSTLTSLKKFYL.

NADP(+) is bound at residue arginine 46. FMN contacts are provided by residues 122-124 (RSS), 243-244 (NG), glycine 284, 299-303 (KPTPS), and arginine 325.

Belongs to the chorismate synthase family. Homotetramer. It depends on FMNH2 as a cofactor.

It carries out the reaction 5-O-(1-carboxyvinyl)-3-phosphoshikimate = chorismate + phosphate. It functions in the pathway metabolic intermediate biosynthesis; chorismate biosynthesis; chorismate from D-erythrose 4-phosphate and phosphoenolpyruvate: step 7/7. Catalyzes the anti-1,4-elimination of the C-3 phosphate and the C-6 proR hydrogen from 5-enolpyruvylshikimate-3-phosphate (EPSP) to yield chorismate, which is the branch point compound that serves as the starting substrate for the three terminal pathways of aromatic amino acid biosynthesis. This reaction introduces a second double bond into the aromatic ring system. In Campylobacter hominis (strain ATCC BAA-381 / DSM 21671 / CCUG 45161 / LMG 19568 / NCTC 13146 / CH001A), this protein is Chorismate synthase.